A 1597-amino-acid polypeptide reads, in one-letter code: Mitogen-activated protein kinase kinase kinase 4 (1597 aa).

2 disordered regions span residues Met1 to Val128 and Ser424 to Pro465. Residues Ser59–Asn69 show a composition bias toward acidic residues. Ser77 is subject to Phosphoserine. Over residues Gln84–Arg94 the composition is skewed to basic residues. At Ser424 the chain carries Phosphoserine. Residue Thr440 is modified to Phosphothreonine. Ser449 carries the phosphoserine modification. Acidic residues predominate over residues Ser449 to Pro458. Position 451 is a phosphothreonine (Thr451). Phosphoserine is present on residues Ser454 and Ser492. Disordered stretches follow at residues Arg1137–Thr1157, Ala1190–Glu1220, and Phe1233–Ser1263. Positions Ala1210–Pro1219 are enriched in polar residues. Residues Ser1241 and Ser1263 each carry the phosphoserine modification. Positions Ser1241–Ala1250 are enriched in basic and acidic residues. Residues Trp1332–Val1590 enclose the Protein kinase domain. ATP contacts are provided by residues Ile1338–Val1346 and Lys1361. Asp1452 functions as the Proton acceptor in the catalytic mechanism.

This sequence belongs to the protein kinase superfamily. STE Ser/Thr protein kinase family. MAP kinase kinase kinase subfamily. Monomer and homodimer. Homodimerization enhances kinase activity. Interacts with CDC42. Interacts with TRAF4; this promotes homodimerization. Binds both upstream activators and downstream substrates in multimolecular complexes. Interacts with AXIN1 and DIXDC1; interaction with DIXDC1 prevents interaction with AXIN1. Interacts with GADD45 and MAP2K6. Interacts with ZFP36; this interaction enhances the association with SH3KBP1/CIN85. Interacts with SH3KBP1; this interaction enhances the association with ZFP36. Mg(2+) is required as a cofactor. As to expression, widely expressed. High expression was found in skeletal muscle, kidney, testis followed by heart brain and lung. Low expression was found in spleen.

The protein localises to the cytoplasm. It is found in the perinuclear region. It carries out the reaction L-seryl-[protein] + ATP = O-phospho-L-seryl-[protein] + ADP + H(+). The catalysed reaction is L-threonyl-[protein] + ATP = O-phospho-L-threonyl-[protein] + ADP + H(+). Its activity is regulated as follows. N-terminal autoinhibitory domain interacts with the C-terminal kinase domain, inhibiting kinase activity, and preventing interaction with its substrate, MAP2K6. The GADD45 proteins activate the kinase by binding to the N-terminal domain. Activated by phosphorylation on Thr-1494. Component of a protein kinase signal transduction cascade. Activates the CSBP2, P38 and JNK MAPK pathways, but not the ERK pathway. Specifically phosphorylates and activates MAP2K4 and MAP2K6. This Mus musculus (Mouse) protein is Mitogen-activated protein kinase kinase kinase 4 (Map3k4).